Reading from the N-terminus, the 778-residue chain is Endonuclease MutS2 (778 aa).

Glycine 328–threonine 335 is an ATP binding site. Residues leucine 702 to lysine 777 form the Smr domain.

This sequence belongs to the DNA mismatch repair MutS family. MutS2 subfamily. As to quaternary structure, homodimer. Binds to stalled ribosomes, contacting rRNA.

Functionally, endonuclease that is involved in the suppression of homologous recombination and thus may have a key role in the control of bacterial genetic diversity. Acts as a ribosome collision sensor, splitting the ribosome into its 2 subunits. Detects stalled/collided 70S ribosomes which it binds and splits by an ATP-hydrolysis driven conformational change. Acts upstream of the ribosome quality control system (RQC), a ribosome-associated complex that mediates the extraction of incompletely synthesized nascent chains from stalled ribosomes and their subsequent degradation. Probably generates substrates for RQC. The protein is Endonuclease MutS2 of Streptococcus pneumoniae (strain 70585).